A 190-amino-acid chain; its full sequence is Pyridoxal 5'-phosphate synthase subunit PdxT (190 aa).

46 to 48 (GES) serves as a coordination point for L-glutamine. Residue Cys-78 is the Nucleophile of the active site. Residues Arg-108 and 137-138 (IR) each bind L-glutamine. Residues His-174 and Glu-176 each act as charge relay system in the active site.

Belongs to the glutaminase PdxT/SNO family. In the presence of PdxS, forms a dodecamer of heterodimers. Only shows activity in the heterodimer.

It catalyses the reaction aldehydo-D-ribose 5-phosphate + D-glyceraldehyde 3-phosphate + L-glutamine = pyridoxal 5'-phosphate + L-glutamate + phosphate + 3 H2O + H(+). The enzyme catalyses L-glutamine + H2O = L-glutamate + NH4(+). It functions in the pathway cofactor biosynthesis; pyridoxal 5'-phosphate biosynthesis. Catalyzes the hydrolysis of glutamine to glutamate and ammonia as part of the biosynthesis of pyridoxal 5'-phosphate. The resulting ammonia molecule is channeled to the active site of PdxS. The sequence is that of Pyridoxal 5'-phosphate synthase subunit PdxT from Herpetosiphon aurantiacus (strain ATCC 23779 / DSM 785 / 114-95).